The chain runs to 320 residues: D-amino-acid oxidase (320 aa).

Glycine 18, glycine 19, valine 20, isoleucine 21, threonine 47, threonine 48, serine 49, glycine 53, glycine 54, leucine 55, valine 161, and threonine 176 together coordinate FAD. Tyrosine 220 and arginine 275 together coordinate D-proline. Residues tyrosine 220 and arginine 275 each coordinate D-serine. Positions 275, 301, 302, 304, and 306 each coordinate FAD. Residue glycine 302 coordinates D-proline. Residue glycine 302 participates in D-serine binding.

This sequence belongs to the DAMOX/DASOX family. It depends on FAD as a cofactor.

The protein resides in the cytoplasm. It localises to the secreted. Its subcellular location is the cell wall. The catalysed reaction is a D-alpha-amino acid + O2 + H2O = a 2-oxocarboxylate + H2O2 + NH4(+). It carries out the reaction D-leucine + O2 + H2O = 4-methyl-2-oxopentanoate + H2O2 + NH4(+). It catalyses the reaction D-valine + O2 + H2O = 3-methyl-2-oxobutanoate + H2O2 + NH4(+). The enzyme catalyses D-isoleucine + O2 + H2O = (R)-3-methyl-2-oxopentanoate + H2O2 + NH4(+). The catalysed reaction is D-methionine + O2 + H2O = 4-methylsulfanyl-2-oxobutanoate + H2O2 + NH4(+). Its function is as follows. Catalyzes the oxidative deamination of D-amino acids with broad substrate specificity. In Streptomyces coelicolor (strain ATCC BAA-471 / A3(2) / M145), this protein is D-amino-acid oxidase.